We begin with the raw amino-acid sequence, 290 residues long: Arylamine N-acetyltransferase 2 (290 aa).

Catalysis depends on Cys-68, which acts as the Acyl-thioester intermediate. Residues Thr-103 and Gly-104 each coordinate CoA. 106–107 (VH) is a binding site for substrate. Catalysis depends on residues His-107 and Asp-122. CoA-binding residues include Tyr-208, Thr-214, and Ser-287.

This sequence belongs to the arylamine N-acetyltransferase family.

The protein localises to the cytoplasm. It catalyses the reaction an arylamine + acetyl-CoA = an N-acetylarylamine + CoA. The enzyme catalyses an N-hydroxyarylamine + acetyl-CoA = an N-acetoxyarylamine + CoA. Catalyzes the N- or O-acetylation of various arylamine and heterocyclic amine substrates. Participates in the detoxification of a plethora of hydrazine and arylamine drugs, and is able to bioactivate several known carcinogens. This is Arylamine N-acetyltransferase 2 (NAT2) from Homo sapiens (Human).